A 172-amino-acid chain; its full sequence is Peptidyl-prolyl cis-trans isomerase (172 aa).

The region spanning 10-168 (YFDVYANEES…YRIEIRDCGV (159 aa)) is the PPIase cyclophilin-type domain.

The protein belongs to the cyclophilin-type PPIase family.

The protein resides in the cytoplasm. The enzyme catalyses [protein]-peptidylproline (omega=180) = [protein]-peptidylproline (omega=0). PPIases accelerate the folding of proteins. They catalyze the cis-trans isomerization of proline imidic peptide bonds in oligopeptides. The chain is Peptidyl-prolyl cis-trans isomerase (CPR1) from Encephalitozoon cuniculi (strain GB-M1) (Microsporidian parasite).